The chain runs to 412 residues: Proteasome-activating nucleotidase (412 aa).

Residues 15–72 (EDLYRYLLERVTNLEDRNTELREQLRQIEADKRYLETQKVRYEREVRKFKGEIEQMKS) adopt a coiled-coil conformation. Residues 197–202 (GTGKTL) and H336 contribute to the ATP site. Residues 410 to 412 (MFA) form a docks into pockets in the proteasome alpha-ring to cause gate opening region.

This sequence belongs to the AAA ATPase family. As to quaternary structure, homohexamer. The hexameric complex has a two-ring architecture resembling a top hat that caps the 20S proteasome core at one or both ends. Upon ATP-binding, the C-terminus of PAN interacts with the alpha-rings of the proteasome core by binding to the intersubunit pockets.

It localises to the cytoplasm. Functionally, ATPase which is responsible for recognizing, binding, unfolding and translocation of substrate proteins into the archaeal 20S proteasome core particle. Is essential for opening the gate of the 20S proteasome via an interaction with its C-terminus, thereby allowing substrate entry and access to the site of proteolysis. Thus, the C-termini of the proteasomal ATPase function like a 'key in a lock' to induce gate opening and therefore regulate proteolysis. Unfolding activity requires energy from ATP hydrolysis, whereas ATP binding alone promotes ATPase-20S proteasome association which triggers gate opening, and supports translocation of unfolded substrates. The chain is Proteasome-activating nucleotidase from Methanosphaerula palustris (strain ATCC BAA-1556 / DSM 19958 / E1-9c).